A 929-amino-acid chain; its full sequence is SED5-binding protein 3 (929 aa).

Residue serine 15 is modified to Phosphoserine. The span at 18-28 shows a compositional bias: polar residues; sequence ESTVHTGGASS. Positions 18–52 are disordered; the sequence is ESTVHTGGASSKKSRRPHRAYHNFSSGTVPTLGNS. A compositionally biased stretch (basic residues) spans 29–38; sequence KKSRRPHRAY. Over residues 40–52 the composition is skewed to polar residues; sequence NFSSGTVPTLGNS. Threonine 72 bears the Phosphothreonine mark. A phosphoserine mark is found at serine 83, serine 85, serine 94, serine 101, and serine 110. Threonine 216 carries the phosphothreonine modification. The interval 220–244 is zinc finger-like; that stretch reads CRRCRAYANPKFQFTYDSSVICNIC.

The protein belongs to the SEC23/SEC24 family. SEC24 subfamily. In terms of assembly, COPII is composed of at least five proteins: the SEC23/24 complex, the SEC13/31 complex and SAR1. Binds to SED5. Interacts with GHR1.

It localises to the cytoplasm. Its subcellular location is the golgi apparatus membrane. The protein resides in the endoplasmic reticulum membrane. Component of the COPII coat, that covers ER-derived vesicles involved in transport from the endoplasmic reticulum to the Golgi apparatus. COPII acts in the cytoplasm to promote the transport of secretory, plasma membrane, and vacuolar proteins from the endoplasmic reticulum to the Golgi complex. In Saccharomyces cerevisiae (strain ATCC 204508 / S288c) (Baker's yeast), this protein is SED5-binding protein 3 (SFB3).